Consider the following 105-residue polypeptide: Vacuolar ATPase assembly integral membrane protein VMA21 homolog (105 aa).

A disordered region spans residues 1–26 (MSTKNKKAAGGNGVAPKQTRQQSHDS). Residues 1-36 (MSTKNKKAAGGNGVAPKQTRQQSHDSQDYSSFKTVL) lie on the Cytoplasmic side of the membrane. A helical membrane pass occupies residues 37 to 57 (FYCMLIVFLPVLTFFVLKGFV). At 58–68 (LDQFLDISEVK) the chain is on the lumenal side. Residues 69–89 (VNIASAVGAVVALHIALGLYI) form a helical membrane-spanning segment. Over 90 to 105 (YRAYFGAPGSKGSKTD) the chain is Cytoplasmic.

This sequence belongs to the VMA21 family.

The protein resides in the endoplasmic reticulum membrane. It is found in the endoplasmic reticulum-Golgi intermediate compartment membrane. It localises to the cytoplasmic vesicle. Its subcellular location is the COPII-coated vesicle membrane. Required for the assembly of the V0 complex of the vacuolar ATPase (V-ATPase) in the endoplasmic reticulum. This is Vacuolar ATPase assembly integral membrane protein VMA21 homolog from Drosophila melanogaster (Fruit fly).